Here is a 285-residue protein sequence, read N- to C-terminus: Polyamine aminopropyltransferase (285 aa).

In terms of domain architecture, PABS spans Asp-5 to Lys-241. S-methyl-5'-thioadenosine is bound at residue Gln-35. Spermidine is bound by residues His-66 and Asp-90. Residues Asp-110 and Asp-141–Gly-142 contribute to the S-methyl-5'-thioadenosine site. Asp-160 serves as the catalytic Proton acceptor. Residue Asp-160–Asp-163 participates in spermidine binding. An S-methyl-5'-thioadenosine-binding site is contributed by Pro-167.

Belongs to the spermidine/spermine synthase family. As to quaternary structure, homodimer or homotetramer.

It localises to the cytoplasm. The enzyme catalyses S-adenosyl 3-(methylsulfanyl)propylamine + putrescine = S-methyl-5'-thioadenosine + spermidine + H(+). Its pathway is amine and polyamine biosynthesis; spermidine biosynthesis; spermidine from putrescine: step 1/1. Functionally, catalyzes the irreversible transfer of a propylamine group from the amino donor S-adenosylmethioninamine (decarboxy-AdoMet) to putrescine (1,4-diaminobutane) to yield spermidine. This Xylella fastidiosa (strain M12) protein is Polyamine aminopropyltransferase.